Consider the following 265-residue polypeptide: Small ribosomal subunit protein uS2 (265 aa).

Belongs to the universal ribosomal protein uS2 family.

The polypeptide is Small ribosomal subunit protein uS2 (Gluconobacter oxydans (strain 621H) (Gluconobacter suboxydans)).